Consider the following 85-residue polypeptide: Large ribosomal subunit protein bL27 (85 aa).

Residues 1–20 (MAHKKAGGSTRNGRDSESKR) are disordered.

It belongs to the bacterial ribosomal protein bL27 family.

In Yersinia enterocolitica serotype O:8 / biotype 1B (strain NCTC 13174 / 8081), this protein is Large ribosomal subunit protein bL27.